Consider the following 272-residue polypeptide: Regulatory protein RecX (272 aa).

The protein belongs to the RecX family.

Its subcellular location is the cytoplasm. Modulates RecA activity. In Oceanobacillus iheyensis (strain DSM 14371 / CIP 107618 / JCM 11309 / KCTC 3954 / HTE831), this protein is Regulatory protein RecX.